We begin with the raw amino-acid sequence, 229 residues long: Cytochrome c oxidase subunit 2 (229 aa).

Topologically, residues 1-14 (MAQQAQLGLQDAAS) are mitochondrial intermembrane. The helical transmembrane segment at 15 to 45 (PIMEELIHFHDHTLTVVFLISVLIFYLIIVM) threads the bilayer. The Mitochondrial matrix portion of the chain corresponds to 46–59 (VTTTFMNKHSLDSQ). The helical transmembrane segment at 60-87 (EVEIVWTVMPAIVLITIALPSLRILYLT) threads the bilayer. The Mitochondrial intermembrane portion of the chain corresponds to 88–229 (DEISNPHLTI…ENWTTKVLAS (142 aa)). H161, C196, E198, C200, H204, and M207 together coordinate Cu cation. E198 is a binding site for Mg(2+).

It belongs to the cytochrome c oxidase subunit 2 family. As to quaternary structure, component of the cytochrome c oxidase (complex IV, CIV), a multisubunit enzyme composed of 14 subunits. The complex is composed of a catalytic core of 3 subunits MT-CO1, MT-CO2 and MT-CO3, encoded in the mitochondrial DNA, and 11 supernumerary subunits COX4I, COX5A, COX5B, COX6A, COX6B, COX6C, COX7A, COX7B, COX7C, COX8 and NDUFA4, which are encoded in the nuclear genome. The complex exists as a monomer or a dimer and forms supercomplexes (SCs) in the inner mitochondrial membrane with NADH-ubiquinone oxidoreductase (complex I, CI) and ubiquinol-cytochrome c oxidoreductase (cytochrome b-c1 complex, complex III, CIII), resulting in different assemblies (supercomplex SCI(1)III(2)IV(1) and megacomplex MCI(2)III(2)IV(2)). Found in a complex with TMEM177, COA6, COX18, COX20, SCO1 and SCO2. Interacts with TMEM177 in a COX20-dependent manner. Interacts with COX20. Interacts with COX16. It depends on Cu cation as a cofactor.

The protein resides in the mitochondrion inner membrane. The catalysed reaction is 4 Fe(II)-[cytochrome c] + O2 + 8 H(+)(in) = 4 Fe(III)-[cytochrome c] + 2 H2O + 4 H(+)(out). In terms of biological role, component of the cytochrome c oxidase, the last enzyme in the mitochondrial electron transport chain which drives oxidative phosphorylation. The respiratory chain contains 3 multisubunit complexes succinate dehydrogenase (complex II, CII), ubiquinol-cytochrome c oxidoreductase (cytochrome b-c1 complex, complex III, CIII) and cytochrome c oxidase (complex IV, CIV), that cooperate to transfer electrons derived from NADH and succinate to molecular oxygen, creating an electrochemical gradient over the inner membrane that drives transmembrane transport and the ATP synthase. Cytochrome c oxidase is the component of the respiratory chain that catalyzes the reduction of oxygen to water. Electrons originating from reduced cytochrome c in the intermembrane space (IMS) are transferred via the dinuclear copper A center (CU(A)) of subunit 2 and heme A of subunit 1 to the active site in subunit 1, a binuclear center (BNC) formed by heme A3 and copper B (CU(B)). The BNC reduces molecular oxygen to 2 water molecules using 4 electrons from cytochrome c in the IMS and 4 protons from the mitochondrial matrix. This Petromyzon marinus (Sea lamprey) protein is Cytochrome c oxidase subunit 2 (MT-CO2).